Consider the following 191-residue polypeptide: dCTP deaminase, dUMP-forming (191 aa).

Residues 101–106 (KSSLGR), D119, 127–129 (TLE), Q148, Y162, and Q174 contribute to the dCTP site. E129 acts as the Proton donor/acceptor in catalysis. Residues 169-191 (SRYQGQRGPTASRSFQNFHRTQV) are disordered. Polar residues predominate over residues 171-191 (YQGQRGPTASRSFQNFHRTQV).

The protein belongs to the dCTP deaminase family. As to quaternary structure, homotrimer.

The catalysed reaction is dCTP + 2 H2O = dUMP + NH4(+) + diphosphate. The protein operates within pyrimidine metabolism; dUMP biosynthesis; dUMP from dCTP: step 1/1. Functionally, bifunctional enzyme that catalyzes both the deamination of dCTP to dUTP and the hydrolysis of dUTP to dUMP without releasing the toxic dUTP intermediate. This is dCTP deaminase, dUMP-forming from Streptomyces griseus subsp. griseus (strain JCM 4626 / CBS 651.72 / NBRC 13350 / KCC S-0626 / ISP 5235).